A 597-amino-acid polypeptide reads, in one-letter code: mRNA-capping enzyme (597 aa).

The segment at 1–212 (MAYNKIPPRW…DEDGKKDSEP (212 aa)) is TPase. The region spanning 25-183 (LPLKTMLGPR…FRRYGDIEEA (159 aa)) is the Tyrosine-protein phosphatase domain. Cys-126 serves as the catalytic Phosphocysteine intermediate. Residues 181 to 221 (EEAPPPPVLPDWCFEDEDEEDEDEDGKKDSEPGSSASFSKR) are disordered. A compositionally biased stretch (acidic residues) spans 193–204 (CFEDEDEEDEDE). The tract at residues 229-597 (GAIFLEGITV…PPPKRLHRPT (369 aa)) is GTase. The active-site N6-GMP-lysine intermediate is the Lys-294. GTP is bound by residues Arg-299, Arg-315, 343-345 (DGE), 458-460 (KWK), and 528-533 (RQRIDK). The segment at 330-386 (RKDLRMHLSNTLLDGEMIIDKVNGQAVPRYLIYDIIKFNAQPVGDCDFNIRLQCIER) is interaction with POLR2A. The segment at 573–597 (KRKYPLDPDTELMPPPPPKRLHRPT) is disordered.

The protein in the N-terminal section; belongs to the non-receptor class of the protein-tyrosine phosphatase family. This sequence in the C-terminal section; belongs to the eukaryotic GTase family. Interacts with SUPT5H and RNMT. Interacts with POLR2A (via C-terminus); this enhances guanylyltransferase activity. Binds (via GTase domain) to the elongating phosphorylated form of RNA polymerase II; can form direct interactions with the phosphorylated POLR2A C-terminal domain and indirect interactions via bound RNA.

The protein resides in the nucleus. It carries out the reaction a 5'-end triphospho-ribonucleoside in mRNA + H2O = a 5'-end diphospho-ribonucleoside in mRNA + phosphate + H(+). It catalyses the reaction a 5'-end diphospho-ribonucleoside in mRNA + GTP + H(+) = a 5'-end (5'-triphosphoguanosine)-ribonucleoside in mRNA + diphosphate. Its activity is regulated as follows. RNA triphosphatase activity is inhibited by vanadate, iodoacetate and magnesium. Its function is as follows. Bifunctional mRNA-capping enzyme exhibiting RNA 5'-triphosphate monophosphatase activity in the N-terminal part and mRNA guanylyltransferase activity in the C-terminal part. Catalyzes the first two steps of cap formation: by removing the gamma-phosphate from the 5'-triphosphate end of nascent mRNA to yield a diphosphate end, and by transferring the GMP moiety of GTP to the 5'-diphosphate terminus of RNA via a covalent enzyme-GMP reaction intermediate. This chain is mRNA-capping enzyme (Rngtt), found in Mus musculus (Mouse).